A 1627-amino-acid chain; its full sequence is Pappalysin-1 (1627 aa).

Positions 1-22 are cleaved as a signal peptide; it reads MRLWSWVLHLGLLSAALGCGLA. Residues 23–81 constitute a propeptide that is removed on maturation; it reads ERPRRARRDPRAGRPPRPAAGPATCATRAARGRRASPPPPPPPGGAWEAVRVPRRRQQR. Residues 23-99 form a disordered region; the sequence is ERPRRARRDP…PSPPSRALYF (77 aa). Positions 42–51 are enriched in low complexity; the sequence is AGPATCATRA. Disulfide bonds link cysteine 144–cysteine 235, cysteine 327–cysteine 622, cysteine 332–cysteine 657, cysteine 414–cysteine 428, cysteine 424–cysteine 440, cysteine 457–cysteine 473, cysteine 474–cysteine 485, cysteine 583–cysteine 600, cysteine 587–cysteine 612, cysteine 710–cysteine 878, cysteine 713–cysteine 881, cysteine 753–cysteine 835, cysteine 775–cysteine 781, cysteine 947–cysteine 975, cysteine 960–cysteine 971, cysteine 983–cysteine 990, and cysteine 999–cysteine 1011. Residues 272–583 form a metalloprotease region; sequence METHGAHTAL…FRGISEIQSC (312 aa). Residues asparagine 390 and asparagine 402 are each glycosylated (N-linked (GlcNAc...) asparagine). N-linked (GlcNAc...) asparagine glycosylation is present at asparagine 429. N-linked (GlcNAc...) asparagine glycosylation is present at asparagine 480. Position 562 (histidine 562) interacts with Zn(2+). Glutamate 563 is an active-site residue. Zn(2+) contacts are provided by histidine 566 and histidine 572. Residues asparagine 601, asparagine 619, and asparagine 725 are each glycosylated (N-linked (GlcNAc...) asparagine). A disordered region spans residues 733–754; the sequence is SPSGHWSPREAEGHPDVEQPCK. Residues 739–751 show a composition bias toward basic and acidic residues; it reads SPREAEGHPDVEQ. Asparagine 825 is a glycosylation site (N-linked (GlcNAc...) asparagine). Asparagine 1026 carries an N-linked (GlcNAc...) asparagine glycan. 19 disulfide bridges follow: cysteine 1036/cysteine 1070, cysteine 1051/cysteine 1139, cysteine 1192/cysteine 1205, cysteine 1215/cysteine 1269, cysteine 1227/cysteine 1238, cysteine 1242/cysteine 1280, cysteine 1285/cysteine 1329, cysteine 1300/cysteine 1310, cysteine 1314/cysteine 1342, cysteine 1346/cysteine 1399, cysteine 1362/cysteine 1373, cysteine 1377/cysteine 1410, cysteine 1415/cysteine 1458, cysteine 1428/cysteine 1438, cysteine 1442/cysteine 1471, cysteine 1478/cysteine 1539, cysteine 1492/cysteine 1502, cysteine 1506/cysteine 1554, and cysteine 1558/cysteine 1576. Sushi domains follow at residues 1213 to 1282, 1283 to 1344, 1345 to 1412, 1413 to 1473, and 1476 to 1556; these read TDCP…ACEP, VDCS…LCEL, MCLA…ACVP, VTCD…VCQE, and GQCS…HCVK. 2 N-linked (GlcNAc...) asparagine glycosylation sites follow: asparagine 1222 and asparagine 1226. N-linked (GlcNAc...) asparagine glycosylation is present at asparagine 1323. Asparagine 1465 carries an N-linked (GlcNAc...) asparagine glycan. A glycan (N-linked (GlcNAc...) asparagine) is linked at asparagine 1519.

Belongs to the peptidase M43B family. In terms of assembly, homodimer; disulfide-linked. In pregnancy serum, predominantly found as a disulfide-linked 2:2 heterotetramer with the proform of PRG2. The cofactor is Zn(2+). Post-translationally, there appear to be no free sulfhydryl groups. In terms of tissue distribution, high levels in placenta and pregnancy serum. In placenta, expressed in X cells in septa and anchoring villi, and in syncytiotrophoblasts in the chorionic villi. Lower levels are found in a variety of other tissues including kidney, myometrium, endometrium, ovaries, breast, prostate, bone marrow, colon, fibroblasts and osteoblasts.

Its subcellular location is the secreted. It carries out the reaction Cleavage of the 135-Met-|-Lys-136 bond in insulin-like growth factor binding protein (IGFBP)-4, and the 143-Ser-|-Lys-144 bond in IGFBP-5.. Inhibited by complexation with the proform of PRG2. In terms of biological role, metalloproteinase which specifically cleaves IGFBP-4 and IGFBP-5, resulting in release of bound IGF. Cleavage of IGFBP-4 is dramatically enhanced by the presence of IGF, whereas cleavage of IGFBP-5 is slightly inhibited by the presence of IGF. This is Pappalysin-1 (PAPPA) from Homo sapiens (Human).